A 440-amino-acid chain; its full sequence is Thymidine phosphorylase (440 aa).

It belongs to the thymidine/pyrimidine-nucleoside phosphorylase family. Homodimer.

The enzyme catalyses thymidine + phosphate = 2-deoxy-alpha-D-ribose 1-phosphate + thymine. It participates in pyrimidine metabolism; dTMP biosynthesis via salvage pathway; dTMP from thymine: step 1/2. Functionally, the enzymes which catalyze the reversible phosphorolysis of pyrimidine nucleosides are involved in the degradation of these compounds and in their utilization as carbon and energy sources, or in the rescue of pyrimidine bases for nucleotide synthesis. The sequence is that of Thymidine phosphorylase from Enterobacter sp. (strain 638).